The following is a 66-amino-acid chain: U1-theraphotoxin-Cg1a 2 (66 aa).

The first 21 residues, 1-21, serve as a signal peptide directing secretion; the sequence is MKTSALFVIFGLVLLFCNSFA. The propeptide occupies 22–29; that stretch reads AELEMTGR. 3 disulfide bridges follow: Cys31/Cys46, Cys38/Cys51, and Cys45/Cys58. Pro63 bears the Proline amide mark.

The protein belongs to the neurotoxin 10 (Hwtx-1) family. 46 (Jztx-7/10/12) subfamily. In terms of tissue distribution, expressed by the venom gland.

The protein resides in the secreted. Functionally, probable ion channel inhibitor. In Chilobrachys guangxiensis (Chinese earth tiger tarantula), this protein is U1-theraphotoxin-Cg1a 2.